We begin with the raw amino-acid sequence, 341 residues long: MSDPVIKCESVYKIFGSNAKKMLHEANGNVDAKTFQDNGCIVGVNNASFEVVKGEMLVVMGLSGSGKSTLLRCISRLTDATSGKIYIDGQDLLTLNNKELIELRRNKMGMVFQSFALLPHKTVVENIAFPLQIKGIKTQDSINKAMEMVKLVGLDGRENYFPRELSGGQQQRVGIARSLAVEPDIWFLDEPFSALDPLIRKEMQDEFLRLQEKLQKTIMFITHDFDEALRLADRIAIMKDGVIEQLDTPANIVLNPATEYVRKFTEEVPRGKVLKIADLMEKPETENLSDFKVSKNEIIENVAEKILTQEKSVAVTDENNKIVGSVHPSKIIHTVFSREKK.

The region spanning 6 to 265 (IKCESVYKIF…PATEYVRKFT (260 aa)) is the ABC transporter domain. 61 to 68 (GLSGSGKS) serves as a coordination point for ATP.

It belongs to the ABC transporter superfamily. The complex is probably composed of two ATP-binding proteins (TmoW), two transmembrane proteins (TmoV) and a solute-binding protein (TmoX).

Its subcellular location is the cell inner membrane. The enzyme catalyses a quaternary ammonium(out) + ATP + H2O = a quaternary ammonium(in) + ADP + phosphate + H(+). In terms of biological role, part of the ABC transporter complex TmoXWV involved in trimethylamine N-oxide (TMAO) import. Responsible for energy coupling to the transport system. This Pelagibacter ubique (strain HTCC1062) protein is Trimethylamine N-oxide transport system ATP-binding protein TmoW.